A 265-amino-acid polypeptide reads, in one-letter code: NAD kinase 1 (265 aa).

Asp45 serves as the catalytic Proton acceptor. Residues 45-46 (DG), 122-123 (NE), Arg148, Asp150, and Ala185 each bind NAD(+).

It belongs to the NAD kinase family. Requires a divalent metal cation as cofactor.

The protein resides in the cytoplasm. The catalysed reaction is NAD(+) + ATP = ADP + NADP(+) + H(+). Involved in the regulation of the intracellular balance of NAD and NADP, and is a key enzyme in the biosynthesis of NADP. Catalyzes specifically the phosphorylation on 2'-hydroxyl of the adenosine moiety of NAD to yield NADP. This chain is NAD kinase 1, found in Bacillus anthracis.